Here is an 811-residue protein sequence, read N- to C-terminus: Capsid protein VP1 (811 aa).

Residues 321-367 form a disordered region; sequence DSPMQEATKRKADSPAVETPAKKGTTGVNVNSQSTDPQNPSSSGATT. Positions 346–366 are enriched in polar residues; that stretch reads TGVNVNSQSTDPQNPSSSGAT.

It is found in the virion. Functionally, capsid protein self-assembles to form an icosahedral capsid with a T=1 symmetry, about 22 nm in diameter, and consisting of 60 copies of size variants of the capsid proteins, which differ in the N-terminushe capsid encapsulates the genomic ssDNA. Capsid proteins are responsible for the attachment to host cell receptors. This attachment induces virion internalization predominantly through clathrin-dependent endocytosis. This Galleria mellonella densovirus (GmDNV) protein is Capsid protein VP1 (VP).